Here is a 2162-residue protein sequence, read N- to C-terminus: Calpain-type cysteine protease ADL1 (2162 aa).

The first 33 residues, 1–33 (MEEEEHRGVVLVCSICGFLFAVLGPLSFWILWA), serve as a signal peptide directing secretion. The Extracellular portion of the chain corresponds to 34 to 70 (VNWRPWRLYSWIYARKWPAYVQGPQLSTLCSFFTLFA). The chain crosses the membrane as a helical span at residues 71-91 (WLVVVSPITVLLVWGGILIAL). Residues 92–95 (LERN) lie on the Cytoplasmic side of the membrane. Residues 96–116 (IIGLAVIMVGVALLLSFYSIM) form a helical membrane-spanning segment. The Extracellular portion of the chain corresponds to 117–127 (LWWRTQWQSSK). A helical membrane pass occupies residues 128–148 (AVAYLLLLAVGLLCAYEFCAV). The Cytoplasmic portion of the chain corresponds to 149-164 (YVTTGASASELNSPSG). Residues 165 to 185 (FFFGVSAISLAINMLFISKIL) traverse the membrane as a helical segment. Over 186–236 (FNGSGFDVDEYVRRLYKFAYSDCVEVAPVSCSPDPPDPSELYMTKSSRVLH) the chain is Extracellular. A helical transmembrane segment spans residues 237 to 257 (LGLLYLCSLMVLVVYSILYGL). At 258–264 (TSKEARW) the chain is on the cytoplasmic side. Residues 265–285 (LGALTSVAVVILDWNLGLCSF) form a helical membrane-spanning segment. At 286 to 294 (RFELLKSRM) the chain is on the extracellular side. The chain crosses the membrane as a helical span at residues 295-315 (IALFVAGTSRVFLICFGVHYW). Residues 316–320 (YLGHC) are Cytoplasmic-facing. A helical membrane pass occupies residues 321–341 (ISYAFVASVLLAAAVSCWLSI). The Extracellular portion of the chain corresponds to 342–626 (SNPSVARIDA…LMFHQVAGSP (285 aa)). The interval 366 to 403 (KGQTSSSNSSDGCGSSVKRSSGSVEAGPHGNATDSMYR) is disordered. Low complexity predominate over residues 370-381 (SSSNSSDGCGSS). Residues 627 to 647 (IRAFVVFTLIFIIETVTVAVH) form a helical membrane-spanning segment. Residues 648 to 663 (RPKPIKVINATHEQFE) are Cytoplasmic-facing. Residues 664–684 (FGFSILLLSPVVCSIMAFIWS) traverse the membrane as a helical segment. The Extracellular segment spans residues 685-697 (LCAEEMTMTSKPR). A helical transmembrane segment spans residues 698 to 718 (KYGFIAWLLSTCVGLLLSFLS). Over 719–722 (KSSV) the chain is Cytoplasmic. A helical transmembrane segment spans residues 723–743 (ILGLSLTVPLMVACLSFAIPI). Residues 744–773 (WMRNGYRFWIPGGELDSRENIRQAPGKKER) lie on the Extracellular side of the membrane. The chain crosses the membrane as a helical span at residues 774-794 (ALFAISITVFTASVIGLGAIV). Residues 795-825 (SAKPLDALGYKGWDADKKSFYSPYATSMYLG) are Cytoplasmic-facing. Residues 826-846 (WALSSTIAVLATGVIPIVAWF) traverse the membrane as a helical segment. Over 847–856 (ATYRFSPSSA) the chain is Extracellular. The helical transmembrane segment at 857–877 (ICVGLFATVLVSFCGVSYWGV) threads the bilayer. The Cytoplasmic portion of the chain corresponds to 878 to 890 (VNSRQDGVPLKAD). A helical membrane pass occupies residues 891 to 911 (FLAALLPLLCIPAVFSLFTGM). Topologically, residues 912-924 (YKWKDDDWKISRG) are extracellular. Residues 925–945 (VYLFVGMGVLLLLGAISAVIV) traverse the membrane as a helical segment. Residues 946 to 949 (TIRP) are Cytoplasmic-facing. A helical transmembrane segment spans residues 950–970 (WTVGVACLLVILFLVFAIGVI). Residues 971-984 (HYWTSNNFYLTRTQ) are Extracellular-facing. A helical membrane pass occupies residues 985-1005 (MLLVCSLAFLLALAAFLMGLF). Topologically, residues 1006 to 1019 (QEKPFVGASIGYFS) are cytoplasmic. The helical transmembrane segment at 1020–1040 (FLFLLTGRALTVLLSPPIVVY) threads the bilayer. Topologically, residues 1041-1063 (SPRVLPVYVYDAHADSAKNVSYA) are extracellular. Residues 1064 to 1084 (FLILYGIALATEVWGVIASLI) form a helical membrane-spanning segment. Residues 1085 to 2162 (LNPPFIGAAI…TKAPIKLEAV (1078 aa)) lie on the Cytoplasmic side of the membrane. Phosphoserine is present on residues Ser1372 and Ser1377. A Calpain catalytic 1 domain is found at 1418–1611 (TGRHCGEIDL…ICSAEYGLFD (194 aa)). Position 1668 is a phosphoserine (Ser1668). A Calpain catalytic 2 domain is found at 1706 to 2008 (NFTDQEFPPD…FRSIYVCRVY (303 aa)). Active-site residues include Cys1772, His1930, and Asn1950.

This sequence belongs to the peptidase C2 family. In terms of processing, autocatalytic proteolytic cleavage leading to the production of mainly cytoplasmic localized subproducts of about 85 and 120 kDa. As to expression, ubiquitously expressed with higher levels in embryos, vasculatures, leaf primordia, leaf margins, and shoot apical meristem (SAM).

It localises to the endoplasmic reticulum membrane. The protein localises to the cytoplasm. It is found in the cell membrane. Its subcellular location is the endosome membrane. Essential protease involved in epiderm development. Required for aleurone cell development in the endosperm probably by maintaining and restricting the aleurone and embryonic epidermal L1 cell-layer fates as well as meristems organization. Involved in the maintenance of adaxial/abaxial axis information in developing leaves, probably by regulating cell proliferation and expansion. Does not need calcium ions to be active. This chain is Calpain-type cysteine protease ADL1 (ADL1), found in Oryza sativa subsp. japonica (Rice).